A 98-amino-acid polypeptide reads, in one-letter code: MFAIVRTGGKQYRVAAGDKIAVEKLAGEAGDKITLGEVLLAGEGDSLADAAKVTVSAEIIAQAKSEKVIVFKKRRRHNYRRRNGHRQQMTLLRIVSVA.

It belongs to the bacterial ribosomal protein bL21 family. As to quaternary structure, part of the 50S ribosomal subunit. Contacts protein L20.

In terms of biological role, this protein binds to 23S rRNA in the presence of protein L20. The polypeptide is Large ribosomal subunit protein bL21 (Novosphingobium aromaticivorans (strain ATCC 700278 / DSM 12444 / CCUG 56034 / CIP 105152 / NBRC 16084 / F199)).